Consider the following 234-residue polypeptide: Thrombin-like enzyme ancrod (234 aa).

One can recognise a Peptidase S1 domain in the interval 1–227; it reads VIGGDECNIN…YRDWVNNVIA (227 aa). 6 cysteine pairs are disulfide-bonded: Cys-7–Cys-141, Cys-28–Cys-44, Cys-78–Cys-232, Cys-120–Cys-188, Cys-152–Cys-167, and Cys-178–Cys-203. Asn-23 carries an N-linked (GlcNAc...) asparagine glycan. Residue His-43 is the Charge relay system of the active site. A glycan (N-linked (GlcNAc...) asparagine) is linked at Asn-79. Asp-88 (charge relay system) is an active-site residue. Residues Asn-99 and Asn-148 are each glycosylated (N-linked (GlcNAc...) asparagine). The active-site Charge relay system is the Ser-182. An N-linked (GlcNAc...) asparagine glycan is attached at Asn-229.

This sequence belongs to the peptidase S1 family. Snake venom subfamily. Monomer. As to expression, expressed by the venom gland.

The protein resides in the secreted. It catalyses the reaction Selective cleavage of Arg-|-Xaa bond in fibrinogen, to form fibrin, and release fibrinopeptide A. The specificity of further degradation of fibrinogen varies with species origin of the enzyme.. In terms of biological role, thrombin-like snake venom serine protease that acts as an anticoagulant. It cleaves fibrinogen (FGA) to split off the A-fibrinopeptides (A, AY and AP), but not the B-fibrinopeptide. The resulting fibrin polymers are imperfectly formed and much smaller in size (1 to 2 um long) than the fibrin polymers produced by the action of thrombin. These ancrod-induced microthrombi are friable, unstable, urea-soluble and have significantly degraded alpha chains. They do not cross-link to form thrombi. They are markedly susceptible to digestion by plasmin and are rapidly removed from circulation by either reticuloendothelial phagocytosis or normal fibrinolysis, or both. Anticoagulation through the removal of fibrinogen from the blood is rapid, occurring within hours following its administration. It does not activate plasminogen and does not degrade preformed, fully cross-linked thrombin fibrin. It also reduces the level of plasminogen activator inhibitor (PAI) and may stimulate the release of tissue plasminogen activator (PLAT) from the endothelium. The profibrinolytic effect of these 2 actions appears to be limited to local microthrombus degradation. The protein is Thrombin-like enzyme ancrod of Calloselasma rhodostoma (Malayan pit viper).